We begin with the raw amino-acid sequence, 409 residues long: Accessory Sec system protein translocase subunit SecY2 (409 aa).

10 helical membrane passes run 16–36, 61–81, 104–124, 132–152, 161–181, 190–210, 242–262, 286–306, 341–361, and 374–394; these read ILIT…PIPG, LSQV…MILL, VVML…FQYH, LLLA…IGNL, MTIL…PLIF, LAII…ITFE, GMAF…IILL, GVVI…FVNI, LFGT…LLFA, and TGIF…FQVI.

The protein belongs to the SecY/SEC61-alpha family. SecY2 subfamily. Component of the accessory SecA2/SecY2 protein translocase complex required to export cell wall proteins. May form heterotrimers with SecE and SecG subunits.

The protein localises to the cell membrane. Its function is as follows. Part of the accessory SecA2/SecY2 system specifically required for export of possible cell wall proteins. The central subunit of a protein translocation channel. In Streptococcus agalactiae serotype III (strain NEM316), this protein is Accessory Sec system protein translocase subunit SecY2.